The following is a 69-amino-acid chain: Conotoxin Cal12.1p5 (69 aa).

Positions 1–23 (DLITNSYTRGKPRHVTSWRNLKT) are excised as a propeptide.

In terms of processing, contains 4 disulfide bonds. As to expression, expressed by the venom duct.

Its subcellular location is the secreted. The sequence is that of Conotoxin Cal12.1p5 from Californiconus californicus (California cone).